Here is a 452-residue protein sequence, read N- to C-terminus: uncharacterized protein (452 aa).

The interval 1–452 (MTAVSSNRNP…LRKPEADTAL (452 aa)) is disordered. Composition is skewed to polar residues over residues 29–41 (RTGTPRTTAVSSN), 95–111 (SPQTGTPRTTAVSSNRN), 129–144 (SPQTGTPGTTAVSSNR), and 163–176 (SPQTGTPGTTAVSS). The span at 177–193 (NRDHEDDGCLLKQESRG) shows a compositional bias: basic and acidic residues. Composition is skewed to polar residues over residues 197–212 (SPQTGTPGTTAVSSNR), 231–245 (SPQTGTPGTTAVSSN), 265–280 (SPQTGTPRTTAVSSNR), 299–314 (SPQTGIPRTTAVSSNR), 333–347 (SPQTGTTRTTAVSSK), 376–394 (TAVSSNRDPRTTAVSSNRN), and 412–426 (SPQTGTPGTTAVSSN). Residues 439–452 (EPQELRKPEADTAL) show a composition bias toward basic and acidic residues.

This is an uncharacterized protein from Homo sapiens (Human).